The primary structure comprises 162 residues: UPF0114 protein Sfri_3655 (162 aa).

Transmembrane regions (helical) follow at residues 15–35 (IMAP…IKFF), 53–73 (LVLI…LIMV), and 136–156 (IMWY…MGYL).

This sequence belongs to the UPF0114 family.

Its subcellular location is the cell membrane. The protein is UPF0114 protein Sfri_3655 of Shewanella frigidimarina (strain NCIMB 400).